Here is a 205-residue protein sequence, read N- to C-terminus: Small ribosomal subunit protein uS4 (205 aa).

Residues 1–46 (MSKRHSAKYKIDRRMGENLWGRPKSPVNQRSYGPGQHGQRRKQKVS) are disordered. Residues 94-154 (SRLDAIVYRA…EKSRNMALVL (61 aa)) form the S4 RNA-binding domain.

Belongs to the universal ribosomal protein uS4 family. In terms of assembly, part of the 30S ribosomal subunit. Contacts protein S5. The interaction surface between S4 and S5 is involved in control of translational fidelity.

Its function is as follows. One of the primary rRNA binding proteins, it binds directly to 16S rRNA where it nucleates assembly of the body of the 30S subunit. With S5 and S12 plays an important role in translational accuracy. The chain is Small ribosomal subunit protein uS4 from Caulobacter sp. (strain K31).